Consider the following 865-residue polypeptide: Serine/threonine-protein kinase greatwall (865 aa).

Met1 bears the N-acetylmethionine mark. The Protein kinase domain occupies 34 to 821 (FTIVKPISRG…MRELKQHPLF (788 aa)). Residues 40-48 (ISRGAFGKV) and Lys61 contribute to the ATP site. The active-site Proton acceptor is the Asp155. A phosphothreonine mark is found at Thr206 and Thr221. Residues Ser362 and Ser442 each carry the phosphoserine modification. Thr508 is modified (phosphothreonine). A phosphoserine mark is found at Ser545, Ser619, Ser644, and Ser655. Thr708 is subject to Phosphothreonine. Ser711 carries the phosphoserine modification. Position 727 is a phosphothreonine; by CDK1 (Thr727). The AGC-kinase C-terminal domain maps to 822-865 (SEVDWENLQHQTMPFVPQPDDETDTSYFEARNNAQHLTISGFSL). A phosphoserine mark is found at Ser861 and Ser864.

This sequence belongs to the protein kinase superfamily. AGC Ser/Thr protein kinase family. Post-translationally, phosphorylation at Thr-727 by CDK1 during M phase activates its kinase activity. Maximum phosphorylation occurs in prometaphase.

Its subcellular location is the cytoplasm. The protein resides in the cytoskeleton. The protein localises to the microtubule organizing center. It localises to the centrosome. It is found in the nucleus. It catalyses the reaction L-seryl-[protein] + ATP = O-phospho-L-seryl-[protein] + ADP + H(+). The enzyme catalyses L-threonyl-[protein] + ATP = O-phospho-L-threonyl-[protein] + ADP + H(+). In terms of biological role, serine/threonine kinase that plays a key role in M phase by acting as a regulator of mitosis entry and maintenance. Acts by promoting the inactivation of protein phosphatase 2A (PP2A) during M phase: does not directly inhibit PP2A but acts by mediating phosphorylation and subsequent activation of ARPP19 and ENSA at 'Ser-62' and 'Ser-67', respectively. ARPP19 and ENSA are phosphatase inhibitors that specifically inhibit the PPP2R2D (PR55-delta) subunit of PP2A. Inactivation of PP2A during M phase is essential to keep cyclin-B1-CDK1 activity high. Following DNA damage, it is also involved in checkpoint recovery by being inhibited. The sequence is that of Serine/threonine-protein kinase greatwall (Mastl) from Mus musculus (Mouse).